The primary structure comprises 280 residues: Thioesterase pynI (280 aa).

Positions 136 to 145 are enriched in acidic residues; the sequence is LADDSDDEDN. The tract at residues 136–167 is disordered; it reads LADDSDDEDNRSDASDASDDGSTMSDEEEEDD.

This sequence belongs to the AMT4 thioesterase family.

The protein operates within secondary metabolite biosynthesis. Its function is as follows. Thioesterase; part of the gene cluster that mediates the biosynthesis of pyranonigrins, a family of antioxidative compounds. The first step of pyranonigrins biosynthesis is performed by the hybrid PKS-NRPS synthetase that condenses 6 malonyl-CoA units to an acetyl starter unit, to form a 1,3,5-trioxotetradecane-6,8-dienyl-ACP. The enoyl reductase (ER) domain of pynA is likely to be functional during the first two rounds of polyketide chain extension, to generate the saturated C-C bonds of the alkyl side chain. PynA subsequently forms the amide bond between the acyl chain and L-serine. Although pynA has a terminal reductase domain, it appears to require the thioesterase pynI for the release of the straight-chain intermediate from pynA via the formation of a tetramic acid pyranonigrin J. The methyltransferase pynC then coverts pyranonigrin J to pyranonigrin I via N-methylation. The FAD-dependent monooxygenase pynG catalyzes an epoxidation-mediated cyclization to form the dihydro-gamma-pyrone moiety, followed by pynD-catalyzed oxidation of the alcohol to the ketone and enolization to yield the characteristic tetramic acid-fused gamma-pyrone core of pyranonigrin H. Pyranonigrin H is substrate of pynH for dehydration-mediated exo-methylene formation from the serine side chain to produce pyranonigrin E, before the oxidase pynE reduces the exo-methylene of pyranonigrin E into a pendant methyl to form pyranonigrin G. The FAD-linked oxidoreductase pynB performs the reverse reaction and converts pyranonigrin G back to pyranonigrin E. In Aspergillus niger (strain ATCC MYA-4892 / CBS 513.88 / FGSC A1513), this protein is Thioesterase pynI.